Here is a 156-residue protein sequence, read N- to C-terminus: Small ribosomal subunit protein uS7c (156 aa).

Belongs to the universal ribosomal protein uS7 family. In terms of assembly, part of the 30S ribosomal subunit.

It is found in the plastid. The protein localises to the chloroplast. In terms of biological role, one of the primary rRNA binding proteins, it binds directly to 16S rRNA where it nucleates assembly of the head domain of the 30S subunit. This chain is Small ribosomal subunit protein uS7c (rps7), found in Guillardia theta (Cryptophyte).